The following is a 238-amino-acid chain: CD209 antigen-like protein A (238 aa).

Topologically, residues 1-51 (MSDSKEMGKRQLRPLDEELLTSSHTRHSIKGFGFQTNSGFSSFTGCLVHSQ) are cytoplasmic. Residues 52–72 (VPLALQVLFLAVCSVLLVVIL) form a helical; Signal-anchor for type II membrane protein membrane-spanning segment. Residues 73-238 (VKVYKIPSSQ…KKLSTSCPSK (166 aa)) lie on the Extracellular side of the membrane. Cysteine 108 and cysteine 119 are joined by a disulfide. In terms of domain architecture, C-type lectin spans 115–229 (FQGSCYFFSV…CTNKKFWICK (115 aa)). The N-linked (GlcNAc...) asparagine glycan is linked to asparagine 130. Intrachain disulfides connect cysteine 136–cysteine 228 and cysteine 207–cysteine 220. Residues glutamate 198, asparagine 200, leucine 202, glutamate 205, asparagine 216, and aspartate 217 each contribute to the Ca(2+) site. The N-linked (GlcNAc...) asparagine glycan is linked to asparagine 216.

In terms of tissue distribution, predominantly expressed in dendritic cells. Detected at very low levels in lung, spleen, lymph nodes and bone marrow.

It is found in the membrane. Its function is as follows. Probable pathogen-recognition receptor. May mediate the endocytosis of pathogens which are subsequently degraded in lysosomal compartments. May recognize in a calcium-dependent manner high mannose N-linked oligosaccharides in a variety of pathogen antigens. The protein is CD209 antigen-like protein A (Cd209a) of Mus musculus (Mouse).